A 122-amino-acid polypeptide reads, in one-letter code: Protein FAM223A (122 aa).

Belongs to the FAM223 family.

The chain is Protein FAM223A (FAM223A) from Homo sapiens (Human).